Consider the following 498-residue polypeptide: ATP synthase subunit beta, chloroplastic (498 aa).

ATP is bound at residue 172–179 (GGAGVGKT).

The protein belongs to the ATPase alpha/beta chains family. In terms of assembly, F-type ATPases have 2 components, CF(1) - the catalytic core - and CF(0) - the membrane proton channel. CF(1) has five subunits: alpha(3), beta(3), gamma(1), delta(1), epsilon(1). CF(0) has four main subunits: a(1), b(1), b'(1) and c(9-12).

Its subcellular location is the plastid. It localises to the chloroplast thylakoid membrane. The enzyme catalyses ATP + H2O + 4 H(+)(in) = ADP + phosphate + 5 H(+)(out). Produces ATP from ADP in the presence of a proton gradient across the membrane. The catalytic sites are hosted primarily by the beta subunits. This chain is ATP synthase subunit beta, chloroplastic, found in Platanus occidentalis (Sycamore).